A 108-amino-acid chain; its full sequence is Nucleoid-associated protein Bpet3552 (108 aa).

The protein belongs to the YbaB/EbfC family. In terms of assembly, homodimer.

It is found in the cytoplasm. The protein resides in the nucleoid. Binds to DNA and alters its conformation. May be involved in regulation of gene expression, nucleoid organization and DNA protection. This Bordetella petrii (strain ATCC BAA-461 / DSM 12804 / CCUG 43448) protein is Nucleoid-associated protein Bpet3552.